The primary structure comprises 272 residues: Putative imidazole glycerol phosphate synthase subunit hisF2 (272 aa).

Aspartate 133 is a catalytic residue.

Belongs to the HisA/HisF family. In terms of assembly, heterodimer of HisH and HisF.

Its subcellular location is the cytoplasm. The enzyme catalyses 5-[(5-phospho-1-deoxy-D-ribulos-1-ylimino)methylamino]-1-(5-phospho-beta-D-ribosyl)imidazole-4-carboxamide + L-glutamine = D-erythro-1-(imidazol-4-yl)glycerol 3-phosphate + 5-amino-1-(5-phospho-beta-D-ribosyl)imidazole-4-carboxamide + L-glutamate + H(+). The protein operates within amino-acid biosynthesis; L-histidine biosynthesis; L-histidine from 5-phospho-alpha-D-ribose 1-diphosphate: step 5/9. Its function is as follows. IGPS catalyzes the conversion of PRFAR and glutamine to IGP, AICAR and glutamate. The HisF subunit catalyzes the cyclization activity that produces IGP and AICAR from PRFAR using the ammonia provided by the HisH subunit. The polypeptide is Putative imidazole glycerol phosphate synthase subunit hisF2 (hisF2) (Vibrio vulnificus (strain YJ016)).